The following is a 366-amino-acid chain: Protein RecA (366 aa).

81 to 88 (GPESSGKT) serves as a coordination point for ATP.

This sequence belongs to the RecA family.

It is found in the cytoplasm. Its function is as follows. Can catalyze the hydrolysis of ATP in the presence of single-stranded DNA, the ATP-dependent uptake of single-stranded DNA by duplex DNA, and the ATP-dependent hybridization of homologous single-stranded DNAs. It interacts with LexA causing its activation and leading to its autocatalytic cleavage. The polypeptide is Protein RecA (Leptospira interrogans serogroup Icterohaemorrhagiae serovar copenhageni (strain Fiocruz L1-130)).